A 530-amino-acid chain; its full sequence is Arginine--tRNA ligase (530 aa).

The 'HIGH' region signature appears at 113 to 123 (ANPTGPLHIGH).

Belongs to the class-I aminoacyl-tRNA synthetase family. As to quaternary structure, monomer.

Its subcellular location is the cytoplasm. It catalyses the reaction tRNA(Arg) + L-arginine + ATP = L-arginyl-tRNA(Arg) + AMP + diphosphate. This Campylobacter jejuni (strain RM1221) protein is Arginine--tRNA ligase.